The following is a 307-amino-acid chain: Coproporphyrin III ferrochelatase (307 aa).

Residues tyrosine 12, arginine 29, 45 to 46 (RY), serine 53, and tyrosine 124 each bind Fe-coproporphyrin III. Fe(2+) contacts are provided by histidine 181 and glutamate 263.

The protein belongs to the ferrochelatase family.

The protein resides in the cytoplasm. It catalyses the reaction Fe-coproporphyrin III + 2 H(+) = coproporphyrin III + Fe(2+). It functions in the pathway porphyrin-containing compound metabolism; protoheme biosynthesis. In terms of biological role, involved in coproporphyrin-dependent heme b biosynthesis. Catalyzes the insertion of ferrous iron into coproporphyrin III to form Fe-coproporphyrin III. It can also insert iron into protoporphyrin IX, but it has a much stronger preference for coproprophyrin III as the substrate. The protein is Coproporphyrin III ferrochelatase of Staphylococcus aureus (strain NCTC 8325 / PS 47).